The primary structure comprises 148 residues: Nucleoside diphosphate kinase (148 aa).

Residues lysine 10, phenylalanine 58, arginine 86, threonine 92, arginine 103, and asparagine 113 each contribute to the ATP site. The active-site Pros-phosphohistidine intermediate is histidine 116.

The protein belongs to the NDK family. It depends on Mg(2+) as a cofactor.

Its subcellular location is the cytoplasm. The enzyme catalyses a 2'-deoxyribonucleoside 5'-diphosphate + ATP = a 2'-deoxyribonucleoside 5'-triphosphate + ADP. The catalysed reaction is a ribonucleoside 5'-diphosphate + ATP = a ribonucleoside 5'-triphosphate + ADP. Functionally, major role in the synthesis of nucleoside triphosphates other than ATP. The ATP gamma phosphate is transferred to the NDP beta phosphate via a ping-pong mechanism, using a phosphorylated active-site intermediate. The sequence is that of Nucleoside diphosphate kinase from Thermoplasma acidophilum (strain ATCC 25905 / DSM 1728 / JCM 9062 / NBRC 15155 / AMRC-C165).